The following is a 346-amino-acid chain: Very-long-chain 3-oxoacyl-CoA reductase (346 aa).

The helical transmembrane segment at 23-43 (AAWIVFGLGISKMVFLTLNFS) threads the bilayer. 7 residues coordinate NADP(+): valine 69, aspartate 123, asparagine 150, tyrosine 222, lysine 226, valine 255, and serine 257. The Proton donor role is filled by tyrosine 222. Catalysis depends on lysine 226, which acts as the Lowers pKa of active site Tyr.

This sequence belongs to the short-chain dehydrogenases/reductases (SDR) family.

The protein resides in the endoplasmic reticulum membrane. The catalysed reaction is a very-long-chain (3R)-3-hydroxyacyl-CoA + NADP(+) = a very-long-chain 3-oxoacyl-CoA + NADPH + H(+). It participates in lipid metabolism; fatty acid biosynthesis. Component of the microsomal membrane bound fatty acid elongation system, which produces the 26-carbon very long-chain fatty acids (VLCFA) from palmitate. Catalyzes the reduction of the 3-ketoacyl-CoA intermediate that is formed in each cycle of fatty acid elongation. VLCFAs serve as precursors for ceramide and sphingolipids. This Kluyveromyces lactis (strain ATCC 8585 / CBS 2359 / DSM 70799 / NBRC 1267 / NRRL Y-1140 / WM37) (Yeast) protein is Very-long-chain 3-oxoacyl-CoA reductase.